The chain runs to 256 residues: Probable transcriptional regulatory protein A1I_03240 (256 aa).

A disordered region spans residues 1 to 21 (MAGHSKFKNIQHRKGAQDKKR).

The protein belongs to the TACO1 family.

Its subcellular location is the cytoplasm. This is Probable transcriptional regulatory protein A1I_03240 from Rickettsia bellii (strain OSU 85-389).